A 372-amino-acid polypeptide reads, in one-letter code: Peptide chain release factor 1 (372 aa).

An N5-methylglutamine modification is found at Gln237.

Belongs to the prokaryotic/mitochondrial release factor family. Post-translationally, methylated by PrmC. Methylation increases the termination efficiency of RF1.

Its subcellular location is the cytoplasm. In terms of biological role, peptide chain release factor 1 directs the termination of translation in response to the peptide chain termination codons UAG and UAA. The chain is Peptide chain release factor 1 from Anaeromyxobacter sp. (strain Fw109-5).